The following is a 743-amino-acid chain: Cytosolic neutral trehalase (743 aa).

Ca(2+) contacts are provided by aspartate 95, aspartate 97, asparagine 99, glutamine 101, and aspartate 106. Substrate contacts are provided by residues arginine 285, 292–293, asparagine 329, 338–340, glutamate 405, arginine 454, and glycine 457; these read WD and RSQ. Active-site proton donor/acceptor residues include aspartate 459 and glutamate 664.

It belongs to the glycosyl hydrolase 37 family. It depends on Ca(2+) as a cofactor.

It localises to the cytoplasm. It catalyses the reaction alpha,alpha-trehalose + H2O = alpha-D-glucose + beta-D-glucose. It functions in the pathway carbohydrate degradation. Its function is as follows. Hydrolyzes intracellular trehalose to glucose. This is Cytosolic neutral trehalase from Beauveria bassiana (strain ARSEF 2860) (White muscardine disease fungus).